Reading from the N-terminus, the 322-residue chain is N-acetyl-gamma-glutamyl-phosphate reductase (322 aa).

Cys-132 is a catalytic residue.

It belongs to the NAGSA dehydrogenase family. Type 1 subfamily.

Its subcellular location is the cytoplasm. It carries out the reaction N-acetyl-L-glutamate 5-semialdehyde + phosphate + NADP(+) = N-acetyl-L-glutamyl 5-phosphate + NADPH + H(+). Its pathway is amino-acid biosynthesis; L-arginine biosynthesis; N(2)-acetyl-L-ornithine from L-glutamate: step 3/4. Its function is as follows. Catalyzes the NADPH-dependent reduction of N-acetyl-5-glutamyl phosphate to yield N-acetyl-L-glutamate 5-semialdehyde. The polypeptide is N-acetyl-gamma-glutamyl-phosphate reductase (Bacteroides fragilis (strain ATCC 25285 / DSM 2151 / CCUG 4856 / JCM 11019 / LMG 10263 / NCTC 9343 / Onslow / VPI 2553 / EN-2)).